Here is a 376-residue protein sequence, read N- to C-terminus: PqqA peptide cyclase (376 aa).

Residues 7 to 222 (VGLPLWLLAE…TNEYRDKLKA (216 aa)) form the Radical SAM core domain. [4Fe-4S] cluster is bound by residues cysteine 21, cysteine 25, and cysteine 28.

Belongs to the radical SAM superfamily. PqqE family. In terms of assembly, interacts with PqqD. The interaction is necessary for activity of PqqE. The cofactor is [4Fe-4S] cluster.

The enzyme catalyses [PQQ precursor protein] + S-adenosyl-L-methionine = E-Y cross-linked-[PQQ precursor protein] + 5'-deoxyadenosine + L-methionine + H(+). It functions in the pathway cofactor biosynthesis; pyrroloquinoline quinone biosynthesis. In terms of biological role, catalyzes the cross-linking of a glutamate residue and a tyrosine residue in the PqqA protein as part of the biosynthesis of pyrroloquinoline quinone (PQQ). The sequence is that of PqqA peptide cyclase from Pseudomonas putida (strain ATCC 47054 / DSM 6125 / CFBP 8728 / NCIMB 11950 / KT2440).